A 420-amino-acid polypeptide reads, in one-letter code: Histidine--tRNA ligase (420 aa).

This sequence belongs to the class-II aminoacyl-tRNA synthetase family. As to quaternary structure, homodimer.

The protein localises to the cytoplasm. The catalysed reaction is tRNA(His) + L-histidine + ATP = L-histidyl-tRNA(His) + AMP + diphosphate + H(+). The chain is Histidine--tRNA ligase from Clostridioides difficile (strain 630) (Peptoclostridium difficile).